A 309-amino-acid chain; its full sequence is MLHNMSNNIHNIASVLTESLSYFQKFQGKTIVIKYGGNAMVDEALKSSFARDIVLMKSVGMNPIVVHGGGPQIGKILEKIGKQSQFIDGMRVTDSETMDVVEMVLGGLVNKEIVNLIHQHGGHSIGLTGKDGSLISAKKLKSDIKPELTSEIIDLGHVGEVDKIDISVINLLLKGDFIPVIAPIGVGKDGFSYNINADLVAGSIAQALNAEKLILLTNTSGLLDANGELLTGLDVNIIDSLIENGTIYGGMLPKIDCALSSVRNGVKSTHIIDGRVAHAVLLEIFTDNGVGTLITCNESGTLITYNEQG.

Residues 69-70 (GG), R91, and N194 each bind substrate.

This sequence belongs to the acetylglutamate kinase family. ArgB subfamily.

It localises to the cytoplasm. The catalysed reaction is N-acetyl-L-glutamate + ATP = N-acetyl-L-glutamyl 5-phosphate + ADP. Its pathway is amino-acid biosynthesis; L-arginine biosynthesis; N(2)-acetyl-L-ornithine from L-glutamate: step 2/4. Catalyzes the ATP-dependent phosphorylation of N-acetyl-L-glutamate. The polypeptide is Acetylglutamate kinase (Vesicomyosocius okutanii subsp. Calyptogena okutanii (strain HA)).